Here is a 452-residue protein sequence, read N- to C-terminus: MPEAVSDGLFDVPGVPMTSGHDLGASAGAPLAVRMRPASLDEVVGQDHLLAPGSPLRRLVEGSGVASVILYGPPGSGKTTLAALISQATGRRFEALSALSAGVKEVRAVIENSRKALLHGEQTVLFIDEVHRFSKTQQDALLSAVEHRVVLLVAATTENPSFSVVAPLLSRSLILQLRPLTAEDTRAVVQRAIDDPRGLGRAVAVAPEAVDLLVQLAAGDARRALTALEVAAEAAQAAGELVSVQTIERSVDKAAVRYDRDGDQHYDVVSAFIKSVRGSDVDAALHYLARMLVAGEDPRFIARRLMILASEDIGMAGPSALQVAVAAAQTVALIGMPEAQLTLAHATIHLATAPKSNAVTTALAAAMNDIKAGKAGLVPAHLRDGHYSGAAALGNAQGYKYSHDDPDGVVAQQYPPDELVDVDYYRPTGRGGEREIAGRLDRLRAIIRKKRG.

An ATP-binding site is contributed by 72–79; sequence GPPGSGKT.

Belongs to the AAA ATPase family. RarA/MGS1/WRNIP1 subfamily.

This is an uncharacterized protein from Mycobacterium tuberculosis (strain ATCC 25618 / H37Rv).